Here is a 116-residue protein sequence, read N- to C-terminus: Large ribosomal subunit protein bL19 (116 aa).

The protein belongs to the bacterial ribosomal protein bL19 family.

This protein is located at the 30S-50S ribosomal subunit interface and may play a role in the structure and function of the aminoacyl-tRNA binding site. The chain is Large ribosomal subunit protein bL19 from Clostridium beijerinckii (strain ATCC 51743 / NCIMB 8052) (Clostridium acetobutylicum).